A 349-amino-acid polypeptide reads, in one-letter code: DNA repair protein XRCC3 (349 aa).

An N-acetylmethionine modification is found at Met-1. 107–114 (GCSSAGKT) provides a ligand contact to ATP.

This sequence belongs to the RecA family. RAD51 subfamily. Interacts with RAD51C and RAD51. Part of the CX3 complex consisting of RAD51C and XRCC3; the complex has a ring-like structure arranged into a flat disc around a central channel; CX3 can interact with RAD51 in vitro. Forms a complex with FANCD2, BRCA2 and phosphorylated FANCG. Interacts with SWSAP1 and ZSWIM7; involved in homologous recombination repair. Interacts directly with PALB2 which may serve as a scaffold for a HR complex containing PALB2, BRCA2, RAD51C, RAD51 and XRCC3.

The protein localises to the nucleus. Its subcellular location is the cytoplasm. The protein resides in the perinuclear region. It localises to the mitochondrion matrix. Its function is as follows. Involved in the homologous recombination repair (HRR) pathway of double-stranded DNA, thought to repair chromosomal fragmentation, translocations and deletions. Part of the RAD21 paralog protein complex CX3 which acts in the BRCA1-BRCA2-dependent HR pathway. Upon DNA damage, CX3 acts downstream of RAD51 recruitment; the complex binds predominantly to the intersection of the four duplex arms of the Holliday junction (HJ) and to junctions of replication forks. Involved in HJ resolution and thus in processing HR intermediates late in the DNA repair process; the function may be linked to the CX3 complex and seems to involve GEN1 during mitotic cell cycle progression. Part of a PALB2-scaffolded HR complex containing BRCA2 and RAD51C and which is thought to play a role in DNA repair by HR. Plays a role in regulating mitochondrial DNA copy number under conditions of oxidative stress in the presence of RAD51 and RAD51C. The polypeptide is DNA repair protein XRCC3 (Xrcc3) (Mus musculus (Mouse)).